The chain runs to 238 residues: NEDD4-binding protein 2-like 1 (238 aa).

Disordered stretches follow at residues 1–36 (MEDS…PRRH) and 183–212 (VLHA…WNTY). Pro residues predominate over residues 20–31 (QPPPRPPPARGP). A compositionally biased stretch (polar residues) spans 192 to 212 (ANRNQGRNSEPSSGSGYWNTY).

As to quaternary structure, interacts with dynactin subunit proteins, including DCTN4, DCTN5 and DCTN5.

Its function is as follows. Might play a role in adipocyte differentiation and triglyceride accumulation. The polypeptide is NEDD4-binding protein 2-like 1 (N4bp2l1) (Mus musculus (Mouse)).